Reading from the N-terminus, the 239-residue chain is Small ribosomal subunit protein uS3 (239 aa).

Positions 39-109 (IRAMIQEIPE…KVQIKIKEVK (71 aa)) constitute a KH type-2 domain. Residues 219–239 (GALLKKQRRPRTEKPAQAGRQ) are disordered.

The protein belongs to the universal ribosomal protein uS3 family. As to quaternary structure, part of the 30S ribosomal subunit. Forms a tight complex with proteins S10 and S14.

Functionally, binds the lower part of the 30S subunit head. Binds mRNA in the 70S ribosome, positioning it for translation. This chain is Small ribosomal subunit protein uS3, found in Treponema denticola (strain ATCC 35405 / DSM 14222 / CIP 103919 / JCM 8153 / KCTC 15104).